The primary structure comprises 123 residues: Small ribosomal subunit protein uS12 (123 aa).

At aspartate 89 the chain carries 3-methylthioaspartic acid.

The protein belongs to the universal ribosomal protein uS12 family. Part of the 30S ribosomal subunit. Contacts proteins S8 and S17. May interact with IF1 in the 30S initiation complex.

Functionally, with S4 and S5 plays an important role in translational accuracy. Interacts with and stabilizes bases of the 16S rRNA that are involved in tRNA selection in the A site and with the mRNA backbone. Located at the interface of the 30S and 50S subunits, it traverses the body of the 30S subunit contacting proteins on the other side and probably holding the rRNA structure together. The combined cluster of proteins S8, S12 and S17 appears to hold together the shoulder and platform of the 30S subunit. This chain is Small ribosomal subunit protein uS12, found in Granulibacter bethesdensis (strain ATCC BAA-1260 / CGDNIH1).